Here is a 106-residue protein sequence, read N- to C-terminus: MECRFFISIILFVVLLNPSLIINMVLGYVLGSLFRSNYSRLKKLLSGNKNENREEEDEHISQMKNPFEDAESDVLQHLKTLGLETKVEGDDLEYLQRLWESMSSKK.

Residues 5 to 25 (FFISIILFVVLLNPSLIINMV) traverse the membrane as a helical segment.

This sequence belongs to the nanovirus U4 protein family.

The protein localises to the membrane. This Cicer arietinum (Chickpea) protein is Protein U4 (DNA-U4).